We begin with the raw amino-acid sequence, 640 residues long: Threonine--tRNA ligase (640 aa).

The region spanning 1–61 is the TGS domain; sequence MVKITYPDNS…MQDSTIKLIT (61 aa). The catalytic stretch occupies residues 242-533; that stretch reads DHRKLGPKLN…LIENFAGEFP (292 aa). Cys-334, His-385, and His-510 together coordinate Zn(2+).

This sequence belongs to the class-II aminoacyl-tRNA synthetase family. Homodimer. Zn(2+) serves as cofactor.

It is found in the cytoplasm. The enzyme catalyses tRNA(Thr) + L-threonine + ATP = L-threonyl-tRNA(Thr) + AMP + diphosphate + H(+). In terms of biological role, catalyzes the attachment of threonine to tRNA(Thr) in a two-step reaction: L-threonine is first activated by ATP to form Thr-AMP and then transferred to the acceptor end of tRNA(Thr). Also edits incorrectly charged L-seryl-tRNA(Thr). The protein is Threonine--tRNA ligase of Petrotoga mobilis (strain DSM 10674 / SJ95).